The sequence spans 226 residues: Octanoyltransferase (226 aa).

A BPL/LPL catalytic domain is found at 34 to 216; that stretch reads GEANELVWLL…AWTEAFGPVR (183 aa). Substrate-binding positions include 73–80, 145–147, and 158–160; these read RGGEYTYH, AIG, and GIA. The active-site Acyl-thioester intermediate is the C176.

The protein belongs to the LipB family.

The protein localises to the cytoplasm. It carries out the reaction octanoyl-[ACP] + L-lysyl-[protein] = N(6)-octanoyl-L-lysyl-[protein] + holo-[ACP] + H(+). It participates in protein modification; protein lipoylation via endogenous pathway; protein N(6)-(lipoyl)lysine from octanoyl-[acyl-carrier-protein]: step 1/2. Its function is as follows. Catalyzes the transfer of endogenously produced octanoic acid from octanoyl-acyl-carrier-protein onto the lipoyl domains of lipoate-dependent enzymes. Lipoyl-ACP can also act as a substrate although octanoyl-ACP is likely to be the physiological substrate. In Maricaulis maris (strain MCS10) (Caulobacter maris), this protein is Octanoyltransferase.